Here is a 62-residue protein sequence, read N- to C-terminus: Chymotrypsin inhibitor SCI-I (62 aa).

The BPTI/Kunitz inhibitor domain occupies 9 to 60; it reads CEQAFGNSGPCFAYIKLYSYNQKTKKCEEFIYGGCQGNDNRFITLAECEQKC. 3 disulfides stabilise this stretch: Cys9-Cys60, Cys19-Cys43, and Cys35-Cys56.

Functionally, inhibits chymotrypsin and thus avoids the accidental chymotrypsin-mediated activation of prophenoloxidase. This enzyme is required by the insect immune system to produce melanin which is used to engulf foreign objects. The sequence is that of Chymotrypsin inhibitor SCI-I from Bombyx mori (Silk moth).